The chain runs to 346 residues: Deoxyhypusine hydroxylase (346 aa).

5 HEAT-like PBS-type repeats span residues 71–100 (VLLR…LNDT), 104–133 (LMVR…LNDE), 213–242 (LKLR…LIKD), 246–275 (AIFR…LQNV), and 279–320 (EMVR…SKDA). 3 residues coordinate Fe cation: H75, H108, and E109. Positions 250, 283, and 284 each coordinate Fe cation.

This sequence belongs to the deoxyhypusine hydroxylase family. Fe(2+) is required as a cofactor.

The enzyme catalyses [eIF5A protein]-deoxyhypusine + AH2 + O2 = [eIF5A protein]-hypusine + A + H2O. The protein operates within protein modification; eIF5A hypusination. Its function is as follows. Catalyzes the hydroxylation of the N(6)-(4-aminobutyl)-L-lysine intermediate produced by deoxyhypusine synthase/DHPS on a critical lysine of the eukaryotic translation initiation factor 5A/eIF-5A. This is the second step of the post-translational modification of that lysine into an unusual amino acid residue named hypusine. Hypusination is unique to mature eIF-5A factor and is essential for its function. This is Deoxyhypusine hydroxylase from Plasmodium vivax (strain Salvador I).